The primary structure comprises 307 residues: GHNDYMCPATNQCTIDKNRRKSCQACRLRKCYEVGMMKGGIRKDRRGGRILKHKRQREEHDNRNAGAIVERRSPNLWPSPLMITHNKKNSPALSLTADQIVSALLEAEPPVVYSEYDPSRPFSEASMMTLLTNLADRELVHMINWAKRVPGFVDLSLHDQVHLLECAWLEILMIGLVWRSVEHPGKLLFAPNLLLDRNQGKCVEGFVEIFDMLLATSSRFRMMNVQGEEFVCLKSIILLNSGIYTFLSSTLKSLEEKDHIHRVLDKIIDTLLHLMAKSGLSLQQQHRRLAQLLLILSHFRHMSNKGM.

Residues 1–43 (GHNDYMCPATNQCTIDKNRRKSCQACRLRKCYEVGMMKGGIRK) constitute a DNA-binding region (nuclear receptor). The segment at 7–31 (CPATNQCTIDKNRRKSCQACRLRKC) adopts an NR C4-type zinc-finger fold. A hinge region spans residues 44-95 (DRRGGRILKHKRQREEHDNRNAGAIVERRSPNLWPSPLMITHNKKNSPALSL). The 212-residue stretch at 96–307 (TADQIVSALL…HFRHMSNKGM (212 aa)) folds into the NR LBD domain.

The protein belongs to the nuclear hormone receptor family. NR3 subfamily. In terms of assembly, binds DNA as a homodimer. Can form a heterodimer with ER-beta.

The protein localises to the nucleus. Functionally, the steroid hormones and their receptors are involved in the regulation of eukaryotic gene expression and affect cellular proliferation and differentiation in target tissues. The sequence is that of Estrogen receptor (ESR1) from Aspidoscelis uniparens (Desert grassland whiptail lizard).